The chain runs to 621 residues: 1-deoxy-D-xylulose-5-phosphate synthase (621 aa).

Residues H80 and 121–123 (GHS) contribute to the thiamine diphosphate site. D152 provides a ligand contact to Mg(2+). Thiamine diphosphate-binding positions include 153–154 (GA), N181, Y288, and E370. Residue N181 participates in Mg(2+) binding.

It belongs to the transketolase family. DXPS subfamily. In terms of assembly, homodimer. Mg(2+) serves as cofactor. Thiamine diphosphate is required as a cofactor.

It carries out the reaction D-glyceraldehyde 3-phosphate + pyruvate + H(+) = 1-deoxy-D-xylulose 5-phosphate + CO2. It functions in the pathway metabolic intermediate biosynthesis; 1-deoxy-D-xylulose 5-phosphate biosynthesis; 1-deoxy-D-xylulose 5-phosphate from D-glyceraldehyde 3-phosphate and pyruvate: step 1/1. In terms of biological role, catalyzes the acyloin condensation reaction between C atoms 2 and 3 of pyruvate and glyceraldehyde 3-phosphate to yield 1-deoxy-D-xylulose-5-phosphate (DXP). This chain is 1-deoxy-D-xylulose-5-phosphate synthase, found in Edwardsiella ictaluri (strain 93-146).